We begin with the raw amino-acid sequence, 585 residues long: Proline--tRNA ligase (585 aa).

It belongs to the class-II aminoacyl-tRNA synthetase family. ProS type 1 subfamily. In terms of assembly, homodimer.

It is found in the cytoplasm. The enzyme catalyses tRNA(Pro) + L-proline + ATP = L-prolyl-tRNA(Pro) + AMP + diphosphate. Catalyzes the attachment of proline to tRNA(Pro) in a two-step reaction: proline is first activated by ATP to form Pro-AMP and then transferred to the acceptor end of tRNA(Pro). As ProRS can inadvertently accommodate and process non-cognate amino acids such as alanine and cysteine, to avoid such errors it has two additional distinct editing activities against alanine. One activity is designated as 'pretransfer' editing and involves the tRNA(Pro)-independent hydrolysis of activated Ala-AMP. The other activity is designated 'posttransfer' editing and involves deacylation of mischarged Ala-tRNA(Pro). The misacylated Cys-tRNA(Pro) is not edited by ProRS. This chain is Proline--tRNA ligase, found in Acidobacterium capsulatum (strain ATCC 51196 / DSM 11244 / BCRC 80197 / JCM 7670 / NBRC 15755 / NCIMB 13165 / 161).